A 175-amino-acid chain; its full sequence is Ribosome maturation factor RimM (175 aa).

The PRC barrel domain occupies Glu100–Trp174.

Belongs to the RimM family. As to quaternary structure, binds ribosomal protein uS19.

The protein resides in the cytoplasm. Functionally, an accessory protein needed during the final step in the assembly of 30S ribosomal subunit, possibly for assembly of the head region. Essential for efficient processing of 16S rRNA. May be needed both before and after RbfA during the maturation of 16S rRNA. It has affinity for free ribosomal 30S subunits but not for 70S ribosomes. The polypeptide is Ribosome maturation factor RimM (Buchnera aphidicola subsp. Schizaphis graminum (strain Sg)).